The following is a 391-amino-acid chain: Phosphoglycerate kinase (391 aa).

Substrate contacts are provided by residues 21 to 23 (DLN), Arg-36, 59 to 62 (HRGR), Arg-113, and Arg-146. ATP is bound by residues Lys-197, Glu-314, and 340-343 (GGDT).

The protein belongs to the phosphoglycerate kinase family. Monomer.

It is found in the cytoplasm. The enzyme catalyses (2R)-3-phosphoglycerate + ATP = (2R)-3-phospho-glyceroyl phosphate + ADP. The protein operates within carbohydrate degradation; glycolysis; pyruvate from D-glyceraldehyde 3-phosphate: step 2/5. This is Phosphoglycerate kinase from Ruthia magnifica subsp. Calyptogena magnifica.